The sequence spans 173 residues: Myosin light chain 5 (173 aa).

Residues 1-22 (MASRKTKKKEGGGLRAQRASSN) are disordered. EF-hand domains lie at 30 to 65 (TQIQ…LGKT), 100 to 135 (DAEE…QADK), and 136 to 171 (MTAE…GEEK). Residues Asp-43, Asn-45, Asp-47, and Asp-54 each coordinate Ca(2+).

Myosin is a hexamer of 2 heavy chains and 4 light chains. Jaw-closing muscles.

This chain is Myosin light chain 5 (MYL5), found in Felis catus (Cat).